The primary structure comprises 113 residues: UPF0342 protein SpyM3_0545 (113 aa).

Belongs to the UPF0342 family.

This chain is UPF0342 protein SpyM3_0545, found in Streptococcus pyogenes serotype M3 (strain ATCC BAA-595 / MGAS315).